We begin with the raw amino-acid sequence, 393 residues long: MLTIGTALRPGATRVMLLGAGELGKEVAIECQRLGLEVIAVDRYADAPAMHVAHRSHVINMLDGAALKQLVAQEKPHYIVPEIEAIATDMLVELEKMGQHVVPCAEATRLTMNREGIRRLAAETLQLPTSSYRFADTDSAFFQAVRDIGYPCIVKPVMSSSGKGQSLIRSEEHLQAAWEYAQQGGRAGSGRVIIEGLVHFDFEITLLTIRAVDGIHFCAPIGHRQEDGDYRESWQPQAMSDIALQRAKEISAQVVTALGGFGLFGVELFVCGDDVIFSEVSPRPHDTGMVTLISQNMSEFALHVRAFLGLPIGTIRQYGAAASAVILPELTSQNITYRGLETALIGDTQIRLFGKPEIAGKRRLGVALAVADNIETAIEVAKKAAGNIEVSGE.

Residues 22 to 23 and E82 each bind N(1)-(5-phospho-beta-D-ribosyl)glycinamide; that span reads EL. Residues R114, K155, 160–165, 195–198, and E203 each bind ATP; these read SSGKGQ and EGLV. The region spanning 119–308 is the ATP-grasp domain; sequence RLAAETLQLP…EFALHVRAFL (190 aa). Residues E267 and E279 each contribute to the Mg(2+) site. N(1)-(5-phospho-beta-D-ribosyl)glycinamide is bound by residues D286, K355, and 362–363; that span reads RR.

The protein belongs to the PurK/PurT family. In terms of assembly, homodimer.

It catalyses the reaction N(1)-(5-phospho-beta-D-ribosyl)glycinamide + formate + ATP = N(2)-formyl-N(1)-(5-phospho-beta-D-ribosyl)glycinamide + ADP + phosphate + H(+). It participates in purine metabolism; IMP biosynthesis via de novo pathway; N(2)-formyl-N(1)-(5-phospho-D-ribosyl)glycinamide from N(1)-(5-phospho-D-ribosyl)glycinamide (formate route): step 1/1. Its function is as follows. Involved in the de novo purine biosynthesis. Catalyzes the transfer of formate to 5-phospho-ribosyl-glycinamide (GAR), producing 5-phospho-ribosyl-N-formylglycinamide (FGAR). Formate is provided by PurU via hydrolysis of 10-formyl-tetrahydrofolate. The polypeptide is Formate-dependent phosphoribosylglycinamide formyltransferase (Yersinia pseudotuberculosis serotype O:3 (strain YPIII)).